Consider the following 203-residue polypeptide: 3-isopropylmalate dehydratase small subunit (203 aa).

It belongs to the LeuD family. LeuD type 1 subfamily. As to quaternary structure, heterodimer of LeuC and LeuD.

The enzyme catalyses (2R,3S)-3-isopropylmalate = (2S)-2-isopropylmalate. The protein operates within amino-acid biosynthesis; L-leucine biosynthesis; L-leucine from 3-methyl-2-oxobutanoate: step 2/4. Functionally, catalyzes the isomerization between 2-isopropylmalate and 3-isopropylmalate, via the formation of 2-isopropylmaleate. The protein is 3-isopropylmalate dehydratase small subunit of Pelagibacter ubique (strain HTCC1062).